A 307-amino-acid polypeptide reads, in one-letter code: Bidirectional sugar transporter SWEET11 (307 aa).

The Extracellular portion of the chain corresponds to 1–14 (MAGGFLSMANPAVT). Residues 15-35 (LSGVAGNIISFLVFLAPVATF) traverse the membrane as a helical segment. Residues 17–100 (GVAGNIISFL…VLYLVYAPRR (84 aa)) form the MtN3/slv 1 domain. The Cytoplasmic portion of the chain corresponds to 36–47 (LQVYKKKSTGGY). A helical transmembrane segment spans residues 48–68 (SSVPYVVALFSSVLWIFYALV). Residues 69–74 (KTNSRP) lie on the Extracellular side of the membrane. The chain crosses the membrane as a helical span at residues 75 to 95 (LLTINAFGCGVEAAYIVLYLV). Residues 96 to 107 (YAPRRARLRTLA) lie on the Cytoplasmic side of the membrane. The helical transmembrane segment at 108-128 (FFLLLDVAAFALIVVTTLYLV) threads the bilayer. Over 129-135 (PKPHQVK) the chain is Extracellular. A helical transmembrane segment spans residues 136 to 156 (FLGSVCLAFSMAVFVAPLSII). Residues 136-219 (FLGSVCLAFS…MGLYFWYRKP (84 aa)) form the MtN3/slv 2 domain. Topologically, residues 157–168 (FKVIKTKSVEFM) are cytoplasmic. The chain crosses the membrane as a helical span at residues 169–189 (PIGLSVCLTLSAVAWFCYGLF). Residues 190–194 (TKDPY) lie on the Extracellular side of the membrane. The helical transmembrane segment at 195–215 (VMYPNVGGFFFSCVQMGLYFW) threads the bilayer. The Cytoplasmic portion of the chain corresponds to 216 to 307 (YRKPRNTAVL…PEVIEITAAV (92 aa)).

This sequence belongs to the SWEET sugar transporter family. In terms of assembly, interacts with COPT1 and COPT2. Interacts with APX8. Mostly expressed in panicles and anthers. Also detected in leaves (leaf collar, leaf auricle, leaf ligule), roots, sheaths, culms and culm nodes.

The protein localises to the cell membrane. Functionally, mediates both low-affinity uptake and efflux of sugar across the plasma membrane. Required for pollen viability. Involved in the transport of copper, in cooperation with COPT1 and COPT2. In terms of biological role, confers sensitivity to bacterial blight mediated by X.oryzae pv. oryzae (Xoo) in its Xa13 allelic form (e.g. cv. IR24), probably by providing the sugar required for the pathogen growth, or by reducing copper contents in xylem. However, a recessive resistance can be associated with the xa13 allele (in which the promoter is mutated leading to reduced induction upon pathogen infection, e.g. cv. IRBB13), specifically toward Xoo Philippine race 6 and Indian race PXO8. The sequence is that of Bidirectional sugar transporter SWEET11 (SWEET11) from Oryza sativa subsp. japonica (Rice).